Here is a 585-residue protein sequence, read N- to C-terminus: MMGLDLLVSLLALSVSPCIAATRSPLQIPVLDTQPIETGREFTLRHMLHHGTYRDPLLHKRLDIRPDTLLWAASENGEKRESVPRFRVSSRPINIHRLSDRHVSVVEDYLSIARMTSSAVTLSSDYWTLDEVDAPDVTDKETVLSLAKMTSNAYIMIPGSGEWFDVVPPFNHSDSFGWDSDGLRGHIYSDNTNSTIVVVLKGTSAAIFDGGGTTTNDKVNDNLFFSCCCAQGGHYFWRQVCDCYSSTYTCNTACVRKALRQENRYYRAALNLYSNITAMYPQSNIWVTGHSLGGAVSSLLGMTYGLPVVTFEAVPEALPASRLGLPPPPGTDPSSPQARNYTGAYHFGHTADPIYMGTCNGATSVCTLGGYAMESSCHTGQLCTYDTVEDFGWRVGIGTHRIREVITDVIERYDDVPTCAPFTECVDCNNWKFFESNETTPTPTTTTTSTSTRTRTSTCKTPGWWGCLDPTTTPTTTATTSTTSTSTCKTPGWFGCKDPTTTSTVPTASPAPTITPTSPPTTTASTTSTCESPGWFGCNDPTSTTTFPVPSTTSTSTPCSTPGWFWGCRDQTTTTSASPPITSPP.

A helical; Signal-anchor for type II membrane protein membrane pass occupies residues 1–21 (MMGLDLLVSLLALSVSPCIAA). Topologically, residues 22-585 (TRSPLQIPVL…SASPPITSPP (564 aa)) are lumenal. N-linked (GlcNAc...) asparagine glycosylation is found at Asn171, Asn193, and Asn275. The active-site Charge relay system is the Ser291. Residues Asn340 and Asn437 are each glycosylated (N-linked (GlcNAc...) asparagine). Positions 500-526 (TTTSTVPTASPAPTITPTSPPTTTAST) are disordered.

This sequence belongs to the AB hydrolase superfamily. Lipase family. As to quaternary structure, binds to both phosphatidylinositol (PI) and phosphatidylinositol 3,5-bisphosphate (PIP2).

Its subcellular location is the endosome. The protein localises to the multivesicular body membrane. It localises to the prevacuolar compartment membrane. It catalyses the reaction a triacylglycerol + H2O = a diacylglycerol + a fatty acid + H(+). Lipase which is essential for lysis of subvacuolar cytoplasm to vacuole targeted bodies and intravacuolar autophagic bodies. Involved in the lysis of intravacuolar multivesicular body (MVB) vesicles. The intravacuolar membrane disintegration by ATG15 is critical to life span extension. This chain is Putative lipase ATG15 (ATG15), found in Ajellomyces capsulatus (strain NAm1 / WU24) (Darling's disease fungus).